The primary structure comprises 436 residues: Septin-7 (436 aa).

S2 is modified (N-acetylserine). Y29 bears the Phosphotyrosine mark. The region spanning 46–315 (RGFEFTLMVV…ENYRSRKLAA (270 aa)) is the Septin-type G domain. The interval 46–316 (RGFEFTLMVV…NYRSRKLAAV (271 aa)) is interaction with SEPTIN12. The G1 motif stretch occupies residues 56-63 (GESGLGKS). Residue 56 to 63 (GESGLGKS) coordinates GTP. S76 carries the phosphoserine modification. GTP is bound by residues T89, G115, and 194–202 (KADTLTPEE). The segment at 112 to 115 (DTPG) is G3 motif. The G4 motif stretch occupies residues 193–196 (AKAD). T227 is subject to Phosphothreonine. Residues G249 and R264 each coordinate GTP. Positions 331 to 436 (TKSPLAQMEE…EKNKKKGKIF (106 aa)) form a coiled coil. Position 333 is a phosphoserine (S333). Residue K372 is modified to N6-acetyllysine. The span at 377–409 (ELQRRHEQMKKNLEAQHKELEEKRRQFEEEKAN) shows a compositional bias: basic and acidic residues. Positions 377 to 436 (ELQRRHEQMKKNLEAQHKELEEKRRQFEEEKANWEAQQRILEQQNSSRTLEKNKKKGKIF) are disordered. A Phosphoserine modification is found at S423. Phosphothreonine is present on T425.

This sequence belongs to the TRAFAC class TrmE-Era-EngA-EngB-Septin-like GTPase superfamily. Septin GTPase family. As to quaternary structure, septins polymerize into heterooligomeric protein complexes that form filaments, and associate with cellular membranes, actin filaments and microtubules. GTPase activity is required for filament formation. Filaments are assembled from asymmetrical heterotrimers, composed of SEPTIN2, SEPTIN6 and SEPTIN7 that associate head-to-head to form a hexameric unit. Within the trimer, directly interacts with SEPTIN6, while interaction with SEPTIN2 seems indirect. In the absence of SEPTIN6, forms homodimers. Interacts directly with CENPE and links CENPE to septin filaments composed of SEPTIN2, SEPTIN6 and SEPTIN7. Interacts with SEPTIN5. Component of a septin core octameric complex consisting of SEPTIN12, SEPTIN7, SEPTIN6 and SEPTIN2 or SEPTIN4 in the order 12-7-6-2-2-6-7-12 or 12-7-6-4-4-6-7-12 and located in the sperm annulus; the SEPTIN12:SEPTIN7 association is mediated by the respective GTP-binding domains. Interacts with SEPTIN2, SEPTIN7, SEPTIN8, SEPTIN9 and SEPTIN11.

The protein localises to the cytoplasm. The protein resides in the chromosome. It is found in the centromere. It localises to the kinetochore. Its subcellular location is the cytoskeleton. The protein localises to the spindle. The protein resides in the cleavage furrow. It is found in the midbody. It localises to the cilium axoneme. Its subcellular location is the cell projection. The protein localises to the cilium. The protein resides in the flagellum. Its function is as follows. Filament-forming cytoskeletal GTPase. Required for normal organization of the actin cytoskeleton. Required for normal progress through mitosis. Involved in cytokinesis. Required for normal association of CENPE with the kinetochore. Plays a role in ciliogenesis and collective cell movements. Forms a filamentous structure with SEPTIN12, SEPTIN6, SEPTIN2 and probably SEPTIN4 at the sperm annulus which is required for the structural integrity and motility of the sperm tail during postmeiotic differentiation. The protein is Septin-7 of Rattus norvegicus (Rat).